The primary structure comprises 890 residues: Translation initiation factor IF-2 (890 aa).

Positions 50–304 are disordered; that stretch reads LRQGSPEQEE…LQQEFERPTA (255 aa). Basic and acidic residues-rich tracts occupy residues 112 to 125, 136 to 147, and 217 to 262; these read KRSD…RKQE, RALEQEEAKREE, and ALKE…QEAK. A tr-type G domain is found at 390 to 559; that stretch reads GRAPVVTVMG…VLQAELQELK (170 aa). A G1 region spans residues 399-406; it reads GHVDHGKT. 399 to 406 provides a ligand contact to GTP; that stretch reads GHVDHGKT. The tract at residues 424–428 is G2; that stretch reads GITQH. Residues 445-448 are G3; it reads DTPG. GTP is bound by residues 445 to 449 and 499 to 502; these read DTPGH and NKMD. A G4 region spans residues 499-502; that stretch reads NKMD. A G5 region spans residues 535 to 537; the sequence is SAM.

It belongs to the TRAFAC class translation factor GTPase superfamily. Classic translation factor GTPase family. IF-2 subfamily.

Its subcellular location is the cytoplasm. Functionally, one of the essential components for the initiation of protein synthesis. Protects formylmethionyl-tRNA from spontaneous hydrolysis and promotes its binding to the 30S ribosomal subunits. Also involved in the hydrolysis of GTP during the formation of the 70S ribosomal complex. This Halorhodospira halophila (strain DSM 244 / SL1) (Ectothiorhodospira halophila (strain DSM 244 / SL1)) protein is Translation initiation factor IF-2.